The chain runs to 194 residues: Dephospho-CoA kinase (194 aa).

One can recognise a DPCK domain in the interval 3-194 (IVGLTGSIGM…RAIVDDLRAG (192 aa)). An ATP-binding site is contributed by 11 to 16 (GMGKST).

It belongs to the CoaE family.

Its subcellular location is the cytoplasm. It catalyses the reaction 3'-dephospho-CoA + ATP = ADP + CoA + H(+). It functions in the pathway cofactor biosynthesis; coenzyme A biosynthesis; CoA from (R)-pantothenate: step 5/5. Catalyzes the phosphorylation of the 3'-hydroxyl group of dephosphocoenzyme A to form coenzyme A. This chain is Dephospho-CoA kinase, found in Rhizobium meliloti (strain 1021) (Ensifer meliloti).